Reading from the N-terminus, the 1847-residue chain is Peripheral-type benzodiazepine receptor-associated protein 1 (1847 aa).

Disordered stretches follow at residues 57–81 (EESS…GTET), 282–318 (NQRE…EDDV), and 560–626 (SGPK…DTAS). Low complexity-rich tracts occupy residues 294-310 (GSTA…GAPG) and 600-613 (SLSN…IHNS). Positions 651–718 (ARIQVFLARY…PSNFVERVSD (68 aa)) constitute an SH3 1 domain. Residues 728 to 787 (ELADSSHSSGPELSFLSGGGGGCSSGGQSSGGRSQPRPEEEATGDELSLSPPPEGLGEPL) are disordered. Residues 744–757 (SGGGGGCSSGGQSS) are compositionally biased toward gly residues. 3 Fibronectin type-III domains span residues 789–880 (VPYP…AGAG), 882–974 (VPSQ…TLPA), and 979–1077 (APLD…PALA). Disordered stretches follow at residues 1107–1174 (LGYT…EGPD), 1191–1215 (DAGP…VCHR), 1240–1307 (NSLV…ILEQ), 1322–1478 (FSIP…ESSL), and 1514–1616 (PTDG…SHQD). A compositionally biased stretch (polar residues) spans 1122 to 1133 (TQDSPASLSTEM). Positions 1203–1215 (LTQKEPSTEVCHR) are enriched in basic and acidic residues. Residues 1253–1266 (DIQEEEEEEEEEEE) are compositionally biased toward acidic residues. A compositionally biased stretch (polar residues) spans 1272 to 1284 (WSFQKQVAGNSIG). 2 stretches are compositionally biased toward acidic residues: residues 1296–1305 (CETDSDEEIL) and 1325–1335 (PEEEEEEDEEE). Residues 1340 to 1352 (PGPSSSSQDPSQP) show a composition bias toward low complexity. Composition is skewed to basic and acidic residues over residues 1412 to 1421 (RPQDPREHCS) and 1546 to 1578 (AWEK…ESRG). Residues 1617-1685 (LPLRVFVALF…PCNMVAEVAV (69 aa)) enclose the SH3 2 domain. 2 disordered regions span residues 1701-1747 (PPNV…PGPP) and 1818-1847 (LEGP…RVQC). The 68-residue stretch at 1756–1823 (KTSRPMVAAF…PSNFLEGPGP (68 aa)) folds into the SH3 3 domain.

Belongs to the RIMBP family. As to quaternary structure, interacts with RIMS1 and RIMS2. Interacts with TSPO. Interacts with CACNA1A. As to expression, specifically expressed in brain. High expression level in the limbic system such as the nucleus accumbens, septum, and hippocampus, as well as on the cerebellum and pineal gland. Abundant in the CA1 region of the hippocampus.

It is found in the cytoplasm. The protein localises to the mitochondrion. In terms of biological role, required for synaptic transmission regulation. It probably controls the recruitement of voltage-gated calcium channels to the presynaptic membrane, and modulates neurotransmitter release. The sequence is that of Peripheral-type benzodiazepine receptor-associated protein 1 from Rattus norvegicus (Rat).